Reading from the N-terminus, the 183-residue chain is BLOC-1-related complex subunit 8 homolog (183 aa).

The tract at residues 152-183 (MIGPGTATGRTEAQAATSSNPGELQRSYTTLH) is disordered. Positions 159–183 (TGRTEAQAATSSNPGELQRSYTTLH) are enriched in polar residues.

This sequence belongs to the BORCS8 family.

Its subcellular location is the lysosome membrane. Functionally, may participate in the coupling of lysosomes to microtubule plus-end-directed kinesin motor. The protein is BLOC-1-related complex subunit 8 homolog of Drosophila melanogaster (Fruit fly).